Consider the following 203-residue polypeptide: MRIGVLGYQGGVYEHVYMLRRTFDRLGVHGEAVVVKKPEDLKGLDGVIIPGGESTTIGILAKRLGVLEPLREQVLNGLPAMGTCAGAIILAGKVRDKVVGEKSQPLLGVMRVEVVRNFFGRQRESFEADLEIEGLDGRFRGVFIRSPAITAAESPARIISWLDYNGQRVGVAAVQGPLLATSFHPELTGDTRLHELWLRLVKR.

52–54 (GES) lines the L-glutamine pocket. The active-site Nucleophile is Cys-84. Residues Arg-116 and 144 to 145 (IR) contribute to the L-glutamine site. Catalysis depends on charge relay system residues His-184 and Glu-186.

It belongs to the glutaminase PdxT/SNO family. In terms of assembly, in the presence of PdxS, forms a dodecamer of heterodimers. Only shows activity in the heterodimer.

The catalysed reaction is aldehydo-D-ribose 5-phosphate + D-glyceraldehyde 3-phosphate + L-glutamine = pyridoxal 5'-phosphate + L-glutamate + phosphate + 3 H2O + H(+). It carries out the reaction L-glutamine + H2O = L-glutamate + NH4(+). It functions in the pathway cofactor biosynthesis; pyridoxal 5'-phosphate biosynthesis. Its function is as follows. Catalyzes the hydrolysis of glutamine to glutamate and ammonia as part of the biosynthesis of pyridoxal 5'-phosphate. The resulting ammonia molecule is channeled to the active site of PdxS. In Aeropyrum pernix (strain ATCC 700893 / DSM 11879 / JCM 9820 / NBRC 100138 / K1), this protein is Pyridoxal 5'-phosphate synthase subunit PdxT.